The primary structure comprises 568 residues: Urease subunit alpha (568 aa).

Positions 130 to 568 (GGIDTHIHFI…LPMAQRYFLF (439 aa)) constitute a Urease domain. Residues His135, His137, and Lys218 each coordinate Ni(2+). Lys218 carries the N6-carboxylysine modification. His220 is a substrate binding site. Positions 247 and 273 each coordinate Ni(2+). His321 serves as the catalytic Proton donor. Asp361 contacts Ni(2+).

This sequence belongs to the metallo-dependent hydrolases superfamily. Urease alpha subunit family. As to quaternary structure, heterotrimer of UreA (gamma), UreB (beta) and UreC (alpha) subunits. Three heterotrimers associate to form the active enzyme. Ni cation serves as cofactor. Post-translationally, carboxylation allows a single lysine to coordinate two nickel ions.

The protein resides in the cytoplasm. The enzyme catalyses urea + 2 H2O + H(+) = hydrogencarbonate + 2 NH4(+). It functions in the pathway nitrogen metabolism; urea degradation; CO(2) and NH(3) from urea (urease route): step 1/1. The protein is Urease subunit alpha of Burkholderia pseudomallei (strain 1106a).